Here is a 480-residue protein sequence, read N- to C-terminus: MTLSFTARWRDELPATYTALLPTPLKNARLIWYNDELAQQLAIPASLFDVTNGAGVWGGETLLPGMSPVAQVYSGHQFGVWAGQLGDGRGILLGEQLLADGSTLDWHLKGAGLTPYSRMGDGRAVLRSTIRESLASEAMHYLGIPTTRALSIVASDTPVQRETQETGAMLMRLAQSHMRFGHFEHFYYRREPEKVQQLADFAIRHYWPQWQDVPEKYALWFEEVAARTGRLIAEWQTVGFSHGVMNTDNMSILGLTIDYGPFGFLDDYDPGFIGNHSDHQGRYRFDNQPSVALWNLQRLAQTLTPFIEIDALNRALDRYQDALLTHYGQRMRQKLGFFTEQKDDNALLNELFSLMAREGSDYTRTFRMLSHTEQQSASSPLRDTFIDRTAFDAWFERYRARLRTEAVDDALRQQQMQRVNPAVVLRNWLAQRAIDAAEQGDMAELHRLHEVLRQPFTDRDDDYASRPPEWGKRLEVSCSS.

8 residues coordinate ATP: G86, G88, R89, K109, D121, G122, R172, and R179. D248 serves as the catalytic Proton acceptor. Mg(2+) is bound by residues N249 and D258. D258 serves as a coordination point for ATP.

This sequence belongs to the SELO family. Mg(2+) serves as cofactor. Mn(2+) is required as a cofactor.

The enzyme catalyses L-seryl-[protein] + ATP = 3-O-(5'-adenylyl)-L-seryl-[protein] + diphosphate. The catalysed reaction is L-threonyl-[protein] + ATP = 3-O-(5'-adenylyl)-L-threonyl-[protein] + diphosphate. It carries out the reaction L-tyrosyl-[protein] + ATP = O-(5'-adenylyl)-L-tyrosyl-[protein] + diphosphate. It catalyses the reaction L-histidyl-[protein] + UTP = N(tele)-(5'-uridylyl)-L-histidyl-[protein] + diphosphate. The enzyme catalyses L-seryl-[protein] + UTP = O-(5'-uridylyl)-L-seryl-[protein] + diphosphate. The catalysed reaction is L-tyrosyl-[protein] + UTP = O-(5'-uridylyl)-L-tyrosyl-[protein] + diphosphate. In terms of biological role, nucleotidyltransferase involved in the post-translational modification of proteins. It can catalyze the addition of adenosine monophosphate (AMP) or uridine monophosphate (UMP) to a protein, resulting in modifications known as AMPylation and UMPylation. The polypeptide is Protein nucleotidyltransferase YdiU (Salmonella schwarzengrund (strain CVM19633)).